A 448-amino-acid polypeptide reads, in one-letter code: Alginate biosynthesis transcriptional regulatory protein AlgB (448 aa).

The 115-residue stretch at 10-124 (RILLVDDESA…QLRLATAKQL (115 aa)) folds into the Response regulatory domain. Asp-59 carries the 4-aspartylphosphate modification. In terms of domain architecture, Sigma-54 factor interaction spans 147 to 376 (LDSHSPAMMA…LRNVVERASI (230 aa)). Residues 175–182 (GESGTGKG) and 238–247 (ADGGTLFLDE) contribute to the ATP site. The segment at residues 425–444 (LDQAAKTLGIDASTLYRKRK) is a DNA-binding region (H-T-H motif).

Its pathway is glycan biosynthesis; alginate biosynthesis [regulation]. Its function is as follows. Positive regulator of the alginate biosynthetic gene algD. This is Alginate biosynthesis transcriptional regulatory protein AlgB (algB) from Pseudomonas putida (strain ATCC 47054 / DSM 6125 / CFBP 8728 / NCIMB 11950 / KT2440).